The chain runs to 65 residues: Protein translocase subunit SecE (65 aa).

A helical transmembrane segment spans residues 44 to 64; sequence LVMAVVGLIAYIVQLTTSLII.

Belongs to the SecE/SEC61-gamma family. As to quaternary structure, component of the Sec protein translocase complex. Heterotrimer consisting of SecY (alpha), SecG (beta) and SecE (gamma) subunits. The heterotrimers can form oligomers, although 1 heterotrimer is thought to be able to translocate proteins. Interacts with the ribosome. May interact with SecDF, and other proteins may be involved.

Its subcellular location is the cell membrane. Essential subunit of the Sec protein translocation channel SecYEG. Clamps together the 2 halves of SecY. May contact the channel plug during translocation. This chain is Protein translocase subunit SecE, found in Sulfolobus acidocaldarius (strain ATCC 33909 / DSM 639 / JCM 8929 / NBRC 15157 / NCIMB 11770).